The following is a 354-amino-acid chain: UDP-N-acetylglucosamine--N-acetylmuramyl-(pentapeptide) pyrophosphoryl-undecaprenol N-acetylglucosamine transferase (354 aa).

UDP-N-acetyl-alpha-D-glucosamine contacts are provided by residues 15-17, N127, R163, S191, I244, 263-268, and Q288; these read TGG and ALTVSE.

This sequence belongs to the glycosyltransferase 28 family. MurG subfamily.

It is found in the cell inner membrane. It carries out the reaction di-trans,octa-cis-undecaprenyl diphospho-N-acetyl-alpha-D-muramoyl-L-alanyl-D-glutamyl-meso-2,6-diaminopimeloyl-D-alanyl-D-alanine + UDP-N-acetyl-alpha-D-glucosamine = di-trans,octa-cis-undecaprenyl diphospho-[N-acetyl-alpha-D-glucosaminyl-(1-&gt;4)]-N-acetyl-alpha-D-muramoyl-L-alanyl-D-glutamyl-meso-2,6-diaminopimeloyl-D-alanyl-D-alanine + UDP + H(+). The protein operates within cell wall biogenesis; peptidoglycan biosynthesis. Its function is as follows. Cell wall formation. Catalyzes the transfer of a GlcNAc subunit on undecaprenyl-pyrophosphoryl-MurNAc-pentapeptide (lipid intermediate I) to form undecaprenyl-pyrophosphoryl-MurNAc-(pentapeptide)GlcNAc (lipid intermediate II). In Vibrio cholerae serotype O1 (strain ATCC 39541 / Classical Ogawa 395 / O395), this protein is UDP-N-acetylglucosamine--N-acetylmuramyl-(pentapeptide) pyrophosphoryl-undecaprenol N-acetylglucosamine transferase.